The following is a 403-amino-acid chain: Ribosomal RNA large subunit methyltransferase I (403 aa).

The region spanning 9 to 88 (YPRLVLSKGR…ESIDIAFFTR (80 aa)) is the PUA domain.

Belongs to the methyltransferase superfamily. RlmI family.

The protein localises to the cytoplasm. It carries out the reaction cytidine(1962) in 23S rRNA + S-adenosyl-L-methionine = 5-methylcytidine(1962) in 23S rRNA + S-adenosyl-L-homocysteine + H(+). Functionally, specifically methylates the cytosine at position 1962 (m5C1962) of 23S rRNA. The polypeptide is Ribosomal RNA large subunit methyltransferase I (Salmonella choleraesuis (strain SC-B67)).